Here is a 699-residue protein sequence, read N- to C-terminus: Elongation factor G (699 aa).

Positions 8–290 constitute a tr-type G domain; it reads NRYRNIGICA…AVIEFLPAPD (283 aa). Residues 17-24, 88-92, and 142-145 contribute to the GTP site; these read AHVDAGKT, DTPGH, and NKMD.

It belongs to the TRAFAC class translation factor GTPase superfamily. Classic translation factor GTPase family. EF-G/EF-2 subfamily.

The protein resides in the cytoplasm. Catalyzes the GTP-dependent ribosomal translocation step during translation elongation. During this step, the ribosome changes from the pre-translocational (PRE) to the post-translocational (POST) state as the newly formed A-site-bound peptidyl-tRNA and P-site-bound deacylated tRNA move to the P and E sites, respectively. Catalyzes the coordinated movement of the two tRNA molecules, the mRNA and conformational changes in the ribosome. This chain is Elongation factor G, found in Alcanivorax borkumensis (strain ATCC 700651 / DSM 11573 / NCIMB 13689 / SK2).